We begin with the raw amino-acid sequence, 150 residues long: Large ribosomal subunit protein bL9 (150 aa).

The protein belongs to the bacterial ribosomal protein bL9 family.

Binds to the 23S rRNA. The protein is Large ribosomal subunit protein bL9 of Hydrogenovibrio crunogenus (strain DSM 25203 / XCL-2) (Thiomicrospira crunogena).